The primary structure comprises 112 residues: Protein BEX3 (112 aa).

A disordered region spans residues 1–45; the sequence is MANIHQENEEMEQPVQNGEEDRPLGGGEGHQPERNHRRGQARRLA. The interaction with p75NTR/NGFR stretch occupies residues 69 to 94; that stretch reads EIFMEEMREIRRKLRELQLRNCLRIL. Residues 69–112 are interaction with 14-3-3 epsilon; the sequence is EIFMEEMREIRRKLRELQLRNCLRILMGELSNHHDHHDEFCLMP. A Nuclear export signal motif is present at residues 78–88; the sequence is IRRKLRELQLR. Positions 101 to 105 are his cluster; sequence HHDHH. Residue cysteine 109 participates in Zn(2+) binding.

It belongs to the BEX family. Self-associates. Binds to the DEATH domain of p75NTR/NGFR. Interacts with 14-3-3 epsilon (YWHAE). Interacts with DIABLO/SMAC. In terms of processing, ubiquitinated. Degraded by the proteasome.

Its subcellular location is the nucleus. The protein localises to the cytoplasm. It is found in the cytosol. In terms of biological role, may be a signaling adapter molecule involved in NGFR/p75NTR-mediated apoptosis induced by NGF. Plays a role in zinc-triggered neuronal death. In absence of reductive stress, acts as a pseudosubstrate for the CRL2(FEM1B) complex: associates with FEM1B via zinc, thereby preventing association between FEM1B and its substrates. This chain is Protein BEX3, found in Bos taurus (Bovine).